A 110-amino-acid polypeptide reads, in one-letter code: Transmembrane protein 233 (110 aa).

A disordered region spans residues 1 to 32 (MSQYASRSDSKGALDSSSPEAYTEDDKTEEDI). The Cytoplasmic portion of the chain corresponds to 1–42 (MSQYASRSDSKGALDSSSPEAYTEDDKTEEDIPAPSNYLWLT). Residues 22–32 (YTEDDKTEEDI) show a composition bias toward acidic residues. The helical intramembrane region spans 43-63 (IISCFCPAYPVNIVALVFSIM). At 64-85 (SLNSYNDGDYEGARRLGRNAKW) the chain is on the cytoplasmic side. The helical transmembrane segment at 86-106 (VAIASIIIGLVIIGVSCAVHF) threads the bilayer. The Extracellular segment spans residues 107-110 (SRNP).

It belongs to the CD225/Dispanin family. Interacts with the giant stinging tree toxin ExTxA (P0DQP3). Interacts with Nav1.7/SCN9A. Interacts with Nav1.1/SCN1A, Nav1.2/SCN2A, Nav1.3/SCN3A, Nav1.4/SCN4A, Nav1.5/SCN5A, and Nav1.6/SCN8A. Probably expressed in nociceptive neurons. Detected in dorsal root ganglion neurons.

The protein resides in the membrane. Functionally, probable accessory protein of voltage-gated sodium channels. This is Transmembrane protein 233 from Mus musculus (Mouse).